Reading from the N-terminus, the 904-residue chain is Nitrate reductase [NADH] 1 (904 aa).

Polar residues-rich tracts occupy residues 1 to 10 (MAASVENRQF) and 39 to 50 (STNFQKKPNSTI). Positions 1–65 (MAASVENRQF…SSEDDDDDDE (65 aa)) are disordered. Residues 56–65 (SSEDDDDDDE) show a composition bias toward acidic residues. Position 183 (C183) interacts with Mo-molybdopterin. One can recognise a Cytochrome b5 heme-binding domain in the interval 531 to 606 (SKMYSMSEVR…LEEFRIGELL (76 aa)). Heme is bound by residues H566 and H589. In terms of domain architecture, FAD-binding FR-type spans 647-759 (REKIPCKLID…KGPLGHIEYQ (113 aa)). FAD contacts are provided by residues 699 to 702 (RAYT), 716 to 720 (VVKIY), F721, F728, 733 to 735 (QMS), and T786.

The protein belongs to the nitrate reductase family. As to quaternary structure, homodimer. Requires FAD as cofactor. The cofactor is heme. Mo-molybdopterin is required as a cofactor.

The catalysed reaction is nitrite + NAD(+) + H2O = nitrate + NADH + H(+). With respect to regulation, regulated by the nitrogen source and controlled by the circadian rhythm. In terms of biological role, nitrate reductase is a key enzyme involved in the first step of nitrate assimilation in plants, fungi and bacteria. The sequence is that of Nitrate reductase [NADH] 1 (NIA1) from Nicotiana tabacum (Common tobacco).